Consider the following 340-residue polypeptide: Ketol-acid reductoisomerase (NADP(+)) (340 aa).

The 183-residue stretch at 1–183 (MAVTVYYDKD…GAGRTGIIET (183 aa)) folds into the KARI N-terminal Rossmann domain. NADP(+)-binding positions include 26–29 (FGSQ), K49, S54, and 84–87 (DELQ). H109 is a catalytic residue. G135 contacts NADP(+). Positions 184-329 (TFKDETETDL…EKLRAMMPWI (146 aa)) constitute a KARI C-terminal knotted domain. Positions 192, 196, 228, and 232 each coordinate Mg(2+). Residue S253 participates in substrate binding.

This sequence belongs to the ketol-acid reductoisomerase family. The cofactor is Mg(2+).

It catalyses the reaction (2R)-2,3-dihydroxy-3-methylbutanoate + NADP(+) = (2S)-2-acetolactate + NADPH + H(+). The enzyme catalyses (2R,3R)-2,3-dihydroxy-3-methylpentanoate + NADP(+) = (S)-2-ethyl-2-hydroxy-3-oxobutanoate + NADPH + H(+). It functions in the pathway amino-acid biosynthesis; L-isoleucine biosynthesis; L-isoleucine from 2-oxobutanoate: step 2/4. Its pathway is amino-acid biosynthesis; L-valine biosynthesis; L-valine from pyruvate: step 2/4. Involved in the biosynthesis of branched-chain amino acids (BCAA). Catalyzes an alkyl-migration followed by a ketol-acid reduction of (S)-2-acetolactate (S2AL) to yield (R)-2,3-dihydroxy-isovalerate. In the isomerase reaction, S2AL is rearranged via a Mg-dependent methyl migration to produce 3-hydroxy-3-methyl-2-ketobutyrate (HMKB). In the reductase reaction, this 2-ketoacid undergoes a metal-dependent reduction by NADPH to yield (R)-2,3-dihydroxy-isovalerate. The sequence is that of Ketol-acid reductoisomerase (NADP(+)) from Campylobacter hominis (strain ATCC BAA-381 / DSM 21671 / CCUG 45161 / LMG 19568 / NCTC 13146 / CH001A).